A 269-amino-acid chain; its full sequence is Undecaprenyl-diphosphatase (269 aa).

The next 7 helical transmembrane spans lie at 42–62, 83–103, 110–130, 142–162, 186–206, 219–239, and 247–267; these read WDTFIVLIQLGAVLGVVALYF, LTVLIGCIPAFAAGLALHGVI, PYLPQVICVSLILGGVILLVV, GMALSLKTAALIGLFQCLSLL, AEFSFFMAIPIMVGAFALDLL, AIAIGFVVSFLSGLVVVKFLI, and FTPFAWWRIVVGVIGLGLIYI.

Belongs to the UppP family.

It localises to the cell inner membrane. It carries out the reaction di-trans,octa-cis-undecaprenyl diphosphate + H2O = di-trans,octa-cis-undecaprenyl phosphate + phosphate + H(+). Functionally, catalyzes the dephosphorylation of undecaprenyl diphosphate (UPP). Confers resistance to bacitracin. The protein is Undecaprenyl-diphosphatase of Caulobacter sp. (strain K31).